We begin with the raw amino-acid sequence, 147 residues long: Globin (147 aa).

Positions 1 to 147 (GLDGAQKTAL…LLTMLIKAHV (147 aa)) constitute a Globin domain. Histidine 66 and histidine 98 together coordinate heme b.

It belongs to the globin family. Homodimer.

The protein localises to the cytoplasm. In Busycotypus canaliculatus (Channeled whelk), this protein is Globin.